The primary structure comprises 152 residues: Ubiquitin-conjugating enzyme E2 N (152 aa).

The 147-residue stretch at 3–149 (GLPRRIIKET…ARAWTRLYAM (147 aa)) folds into the UBC core domain. At lysine 82 the chain carries N6-acetyllysine. Cysteine 87 functions as the Glycyl thioester intermediate in the catalytic mechanism. Lysine 92 participates in a covalent cross-link: Glycyl lysine isopeptide (Lys-Gly) (interchain with G-Cter in ISG15). Serine 131 is subject to Phosphoserine.

Belongs to the ubiquitin-conjugating enzyme family. In terms of assembly, heterodimer with UBE2V2. Interacts (UBE2V2-UBE2N heterodimer) with the E3 ligase STUB1 (via the U-box domain); the complex has a specific 'Lys-63'-linked polyubiquitination activity. Interacts with RNF8 and RNF168. Interacts with RNF11. Interacts with the E3 ligases, HLTF and SHPRH; the interactions promote the 'Lys-63'-linked polyubiquitination of PCNA upon genotoxic stress and lead to DNA repair. Interacts with ARIH2 (via RING-type 2). Interacts with OTUB1; leading to inhibit E2-conjugating activity. Interacts with GPS2; leading to inhibit E2-conjugating activity. Interacts with RIGI and RNF135; involved in RIGI ubiquitination and activation. In terms of processing, conjugation to ISG15 impairs formation of the thioester bond with ubiquitin but not interaction with UBE2V2.

It catalyses the reaction S-ubiquitinyl-[E1 ubiquitin-activating enzyme]-L-cysteine + [E2 ubiquitin-conjugating enzyme]-L-cysteine = [E1 ubiquitin-activating enzyme]-L-cysteine + S-ubiquitinyl-[E2 ubiquitin-conjugating enzyme]-L-cysteine.. It functions in the pathway protein modification; protein ubiquitination. Its activity is regulated as follows. Activity is inhibited by binding to OTUB1, which prevents 'Lys-63'-linked polyubiquitination. Activity is inhibited by GPS2, leading to prevent 'Lys-63'-linked polyubiquitination. Its function is as follows. The UBE2V1-UBE2N and UBE2V2-UBE2N heterodimers catalyze the synthesis of non-canonical 'Lys-63'-linked polyubiquitin chains. This type of polyubiquitination does not lead to protein degradation by the proteasome. Mediates transcriptional activation of target genes. Plays a role in the control of progress through the cell cycle and differentiation. Plays a role in the error-free DNA repair pathway and contributes to the survival of cells after DNA damage. Acts together with the E3 ligases, HLTF and SHPRH, in the 'Lys-63'-linked poly-ubiquitination of PCNA upon genotoxic stress, which is required for DNA repair. Appears to act together with E3 ligase RNF5 in the 'Lys-63'-linked polyubiquitination of JKAMP thereby regulating JKAMP function by decreasing its association with components of the proteasome and ERAD. Promotes TRIM5 capsid-specific restriction activity and the UBE2V1-UBE2N heterodimer acts in concert with TRIM5 to generate 'Lys-63'-linked polyubiquitin chains which activate the MAP3K7/TAK1 complex which in turn results in the induction and expression of NF-kappa-B and MAPK-responsive inflammatory genes. Together with RNF135 and UB2V1, catalyzes the viral RNA-dependent 'Lys-63'-linked polyubiquitination of RIGI to activate the downstream signaling pathway that leads to interferon beta production. UBE2V1-UBE2N together with TRAF3IP2 E3 ubiquitin ligase mediate 'Lys-63'-linked polyubiquitination of TRAF6, a component of IL17A-mediated signaling pathway. The protein is Ubiquitin-conjugating enzyme E2 N (Ube2n) of Rattus norvegicus (Rat).